Reading from the N-terminus, the 67-residue chain is MAFLKKSLFLVFFLGFVSLSICEEEKRETDEKENEQEDDREERSEEKRLLGMIPVAITAISALSKLG.

The signal sequence occupies residues 1 to 22 (MAFLKKSLFLVFFLGFVSLSIC). A propeptide spanning residues 23-48 (EEEKRETDEKENEQEDDREERSEEKR) is cleaved from the precursor. Residues 25–46 (EKRETDEKENEQEDDREERSEE) are disordered. A compositionally biased stretch (acidic residues) spans 31-40 (EKENEQEDDR). Residue L66 is modified to Leucine amide.

Belongs to the frog skin active peptide (FSAP) family. Medusin subfamily. In the synthetic mutant medusin-PT1a [T58K], the Leu-50 has been modified in a D-amino acid. In medusin-PT1a, there is an increase in antimicrobial activity, and an increase in hemolytic activity. It is more potent against S.aureus and gains activity against MRSA, E.faecalis, E.coli, P.aeruginosa and C.albicans. There is an important increase in both biofilm inhibition and biofilm eradication. In terms of tissue distribution, expressed by the skin glands.

It localises to the secreted. The protein localises to the target cell membrane. Functionally, antimicrobial peptide with activity against Gram-positive bacteria S.epidermidis ATCC 12228 (MIC=50 uM) and S.aureus (MIC=64 ug/ml and MBC=128 ug/ml). Not active against some Gram-positive bacteria (methicillin-resistant S.aureus (MRSA), E.faecalis), Gram-negative bacterium E.coli ATCC 25922 and fungus C.albicans at concentrations up to 100 uM. Can only slightly inhibit the formation of biofilm by S.aureus (minimal biofilm inhibitionconcentration MBIC=512 ug/ml, minimal biofilm eradication concentration MBEC&gt;512 ug/ml). Has an anti-inflammatory effect, since it inhibits the production of the pro-inflammatory cytokines TNF-alpha and IL-1beta. Has high activity of stimulation of insulin release, which may protect the species from being eaten by predators by causing fatal hypoglycemia. Is not cytotoxic to cancer line cells. Shows very low hemolysis on horse erythrocytes and moderate hemolysis on mouse erythrocytes. The polypeptide is Medusin-PT (Phyllomedusa tarsius (Brownbelly leaf frog)).